Here is a 243-residue protein sequence, read N- to C-terminus: MAGHSKWANIQHRKGRQDAKRGKLWTKIIREITVAARAGGADPDSNPRLRLAWDKATDANMPKDNVQRAIQRGAGGADGDNYEEVRYEGYGIGGAAVIVDCMTDNRTRTVAEVRHAFAKNGGNLGQEGSVAFMFKHCGQFLFAPGSSEDKVMEVALDAGAEDVITDDEGGIEVICAPADYPALRQAFEAAGLKAEVDAVIMKAQSETELTGDDAIKMQKLLDALEGLDDVQEVYTNVVFDEAQ.

Residues 1 to 21 (MAGHSKWANIQHRKGRQDAKR) are disordered.

This sequence belongs to the TACO1 family.

The protein localises to the cytoplasm. The protein is Probable transcriptional regulatory protein BAV2207 of Bordetella avium (strain 197N).